The sequence spans 75 residues: uncharacterized protein (75 aa).

The helical transmembrane segment at 44–64 threads the bilayer; sequence IINMIVIWAALIALFVKLYIL.

It localises to the host membrane. This is an uncharacterized protein from Ostreid herpesvirus 1 (isolate France) (OsHV-1).